Consider the following 90-residue polypeptide: Acylphosphatase (90 aa).

The 86-residue stretch at serine 5–tyrosine 90 folds into the Acylphosphatase-like domain. Residues arginine 20 and asparagine 38 contribute to the active site.

Belongs to the acylphosphatase family.

The enzyme catalyses an acyl phosphate + H2O = a carboxylate + phosphate + H(+). This chain is Acylphosphatase (acyP), found in Aliivibrio fischeri (strain ATCC 700601 / ES114) (Vibrio fischeri).